Here is a 261-residue protein sequence, read N- to C-terminus: Small ribosomal subunit protein eS1 (261 aa).

Residues 1–18 are compositionally biased toward basic residues; it reads MAVGKNKRISKGKKGGKK. The interval 1–22 is disordered; sequence MAVGKNKRISKGKKGGKKKAAD.

Belongs to the eukaryotic ribosomal protein eS1 family. Component of the small ribosomal subunit. Mature ribosomes consist of a small (40S) and a large (60S) subunit. The 40S subunit contains about 33 different proteins and 1 molecule of RNA (18S). The 60S subunit contains about 49 different proteins and 3 molecules of RNA (25S, 5.8S and 5S).

The protein localises to the cytoplasm. The polypeptide is Small ribosomal subunit protein eS1 (Cicer arietinum (Chickpea)).